The primary structure comprises 72 residues: Brevinin-2GHc (72 aa).

Residues 1–22 form the signal peptide; it reads MFTMKKSLLLLFFLGMISLSLC. Positions 23–42 are excised as a propeptide; the sequence is EQERGADEDEGEVEEQIKRS. Cys-64 and Cys-70 form a disulfide bridge.

Expressed by the skin glands.

It localises to the secreted. In terms of biological role, antimicrobial peptide. Active against the Gram-positive bacteria S.aureus FDA209P (MIC=9.8 ug/ml) and B.subtilis ATCC 6633 (MIC&gt;64 ug/ml), and the Gram-negative bacteria E.coli O111 (MIC=19.6 ug/ml) and E.coli ATCC 25922 (MIC=9.8 ug/ml). Not active against the fungus C.albicans. The polypeptide is Brevinin-2GHc (Sylvirana guentheri (Gunther's frog)).